A 144-amino-acid chain; its full sequence is Large ribosomal subunit protein uL15 (144 aa).

Residues 1–57 (MQLNDLRSAPGARREKHRPGRGIGSGLGKTGGRGHKGLTSRSGGKVAPGFEGGQQPL) are disordered. Over residues 21 to 31 (RGIGSGLGKTG) the composition is skewed to gly residues.

This sequence belongs to the universal ribosomal protein uL15 family. Part of the 50S ribosomal subunit.

Its function is as follows. Binds to the 23S rRNA. This Pseudomonas aeruginosa (strain LESB58) protein is Large ribosomal subunit protein uL15.